The chain runs to 300 residues: Ribosomal protein bS6--L-glutamate ligase (300 aa).

Residues 104 to 287 form the ATP-grasp domain; it reads MQLLARQGID…IAGKMIRWIE (184 aa). ATP-binding positions include Lys-141, 178–179, Asp-187, and 211–213; these read EY and RSN. Asp-248, Glu-260, and Asn-262 together coordinate Mg(2+). Mn(2+) contacts are provided by Asp-248, Glu-260, and Asn-262.

The protein belongs to the RimK family. Mg(2+) is required as a cofactor. It depends on Mn(2+) as a cofactor.

Functionally, an L-glutamate ligase that catalyzes the ATP-dependent post-translational addition of glutamate residues to the C-terminus of ribosomal protein bS6 (RpsF). Is also able to catalyze the synthesis of poly-alpha-glutamate in vitro, via ATP hydrolysis from unprotected glutamate as substrate. The number of glutamate residues added to either RpsF or to poly-alpha-glutamate changes with pH. This is Ribosomal protein bS6--L-glutamate ligase from Escherichia fergusonii (strain ATCC 35469 / DSM 13698 / CCUG 18766 / IAM 14443 / JCM 21226 / LMG 7866 / NBRC 102419 / NCTC 12128 / CDC 0568-73).